Here is a 162-residue protein sequence, read N- to C-terminus: Transcription elongation factor GreB (162 aa).

The stretch at 52-73 (KKLLREIDRRVRYLRKRLEDVK) forms a coiled coil.

The protein belongs to the GreA/GreB family. GreB subfamily.

In terms of biological role, necessary for efficient RNA polymerase transcription elongation past template-encoded arresting sites. The arresting sites in DNA have the property of trapping a certain fraction of elongating RNA polymerases that pass through, resulting in locked ternary complexes. Cleavage of the nascent transcript by cleavage factors such as GreA or GreB allows the resumption of elongation from the new 3'terminus. GreB releases sequences of up to 9 nucleotides in length. In Pseudomonas putida (strain ATCC 47054 / DSM 6125 / CFBP 8728 / NCIMB 11950 / KT2440), this protein is Transcription elongation factor GreB.